A 119-amino-acid polypeptide reads, in one-letter code: Holo-[acyl-carrier-protein] synthase (119 aa).

Positions 8 and 59 each coordinate Mg(2+).

It belongs to the P-Pant transferase superfamily. AcpS family. Requires Mg(2+) as cofactor.

Its subcellular location is the cytoplasm. It catalyses the reaction apo-[ACP] + CoA = holo-[ACP] + adenosine 3',5'-bisphosphate + H(+). Its function is as follows. Transfers the 4'-phosphopantetheine moiety from coenzyme A to a Ser of acyl-carrier-protein. The sequence is that of Holo-[acyl-carrier-protein] synthase from Staphylococcus aureus (strain JH1).